We begin with the raw amino-acid sequence, 90 residues long: UPF0298 protein YlbG (90 aa).

Belongs to the UPF0298 family.

Its subcellular location is the cytoplasm. In Bacillus subtilis (strain 168), this protein is UPF0298 protein YlbG (ylbG).